The primary structure comprises 206 residues: Thymidylate kinase (206 aa).

7 to 14 (GGEGVGKT) is a binding site for ATP.

This sequence belongs to the thymidylate kinase family.

It catalyses the reaction dTMP + ATP = dTDP + ADP. Phosphorylation of dTMP to form dTDP in both de novo and salvage pathways of dTTP synthesis. This Synechococcus sp. (strain JA-2-3B'a(2-13)) (Cyanobacteria bacterium Yellowstone B-Prime) protein is Thymidylate kinase.